Here is a 524-residue protein sequence, read N- to C-terminus: Bifunctional purine biosynthesis protein PurH (524 aa).

An MGS-like domain is found at 1 to 145 (MIQQALLSVS…KNHRDVTVIV (145 aa)).

The protein belongs to the PurH family.

It carries out the reaction (6R)-10-formyltetrahydrofolate + 5-amino-1-(5-phospho-beta-D-ribosyl)imidazole-4-carboxamide = 5-formamido-1-(5-phospho-D-ribosyl)imidazole-4-carboxamide + (6S)-5,6,7,8-tetrahydrofolate. It catalyses the reaction IMP + H2O = 5-formamido-1-(5-phospho-D-ribosyl)imidazole-4-carboxamide. Its pathway is purine metabolism; IMP biosynthesis via de novo pathway; 5-formamido-1-(5-phospho-D-ribosyl)imidazole-4-carboxamide from 5-amino-1-(5-phospho-D-ribosyl)imidazole-4-carboxamide (10-formyl THF route): step 1/1. The protein operates within purine metabolism; IMP biosynthesis via de novo pathway; IMP from 5-formamido-1-(5-phospho-D-ribosyl)imidazole-4-carboxamide: step 1/1. The polypeptide is Bifunctional purine biosynthesis protein PurH (Ralstonia nicotianae (strain ATCC BAA-1114 / GMI1000) (Ralstonia solanacearum)).